The following is a 185-amino-acid chain: MSKDDSIKKTVTIGLSTTIFFVLSCFASIPVGFNVSIETSAAFLAFIAVAFGPSVGFYVGLIGHIIKDFFLFGNVSWNWVLCSALIGFIYGLPYKIIDLKYQVFTKKKIVYFWLYQVACNFIIWGFFAPQSDLLIYGQPPKLVYLQSFLIVISNILAYSVVGIKLMTIYSCHYTKQATLMKINNS.

5 consecutive transmembrane segments (helical) span residues 13–33, 42–62, 69–89, 109–129, and 148–168; these read IGLS…PVGF, AFLA…VGLI, FFLF…IGFI, IVYF…FFAP, and FLIV…LMTI.

It belongs to the UPF0397 family.

The protein localises to the cell membrane. This Aster yellows witches'-broom phytoplasma (strain AYWB) protein is UPF0397 protein AYWB_013.